Consider the following 903-residue polypeptide: Protein translocase subunit SecA (903 aa).

ATP-binding positions include Gln87, 105–109, and Asp507; that span reads GEGKT. Disordered stretches follow at residues 565–584 and 855–877; these read ESRRIDNQLRGRSGRQGDPG and AEPGSALGDDEDNPLSPEALASQ. Residues Cys887, Cys889, Cys898, and His899 each coordinate Zn(2+).

Belongs to the SecA family. In terms of assembly, monomer and homodimer. Part of the essential Sec protein translocation apparatus which comprises SecA, SecYEG and auxiliary proteins SecDF-YajC and YidC. Zn(2+) serves as cofactor.

Its subcellular location is the cell inner membrane. The protein resides in the cytoplasm. The catalysed reaction is ATP + H2O + cellular proteinSide 1 = ADP + phosphate + cellular proteinSide 2.. Its function is as follows. Part of the Sec protein translocase complex. Interacts with the SecYEG preprotein conducting channel. Has a central role in coupling the hydrolysis of ATP to the transfer of proteins into and across the cell membrane, serving both as a receptor for the preprotein-SecB complex and as an ATP-driven molecular motor driving the stepwise translocation of polypeptide chains across the membrane. This is Protein translocase subunit SecA from Chromobacterium violaceum (strain ATCC 12472 / DSM 30191 / JCM 1249 / CCUG 213 / NBRC 12614 / NCIMB 9131 / NCTC 9757 / MK).